Consider the following 426-residue polypeptide: Amino acid transporter AVT1H (426 aa).

Helical transmembrane passes span 34–54 (SFLH…QLSM), 55–75 (PYAV…FGIL), 110–130 (LIVC…YTIS), 148–168 (HFPA…SLWI), 182–202 (ILMS…GGVI), 215–235 (IPTV…FPNL), 248–268 (VSIV…ITGA), 292–312 (IALW…FAPL), 340–360 (LLLV…VLSL), 363–383 (SLVS…KICW), and 392–412 (AANL…SFES).

The protein belongs to the amino acid/polyamine transporter 2 family. Amino acid/auxin permease (AAAP) (TC 2.A.18.5) subfamily.

The protein localises to the membrane. This chain is Amino acid transporter AVT1H, found in Arabidopsis thaliana (Mouse-ear cress).